The chain runs to 356 residues: Glutamine synthetase PR-1 (356 aa).

One can recognise a GS beta-grasp domain in the interval 19–99 (VIAEYIWIGG…VICDAYTPAG (81 aa)). Residues 41–64 (PGPVKNPSELPKWNYDGSSTGQAP) are disordered. In terms of domain architecture, GS catalytic spans 106-356 (KRHNAAKIFS…IADTTILWKP (251 aa)).

Belongs to the glutamine synthetase family. Homooctamer. Roots.

It localises to the cytoplasm. It catalyses the reaction L-glutamate + NH4(+) + ATP = L-glutamine + ADP + phosphate + H(+). The chain is Glutamine synthetase PR-1 from Phaseolus vulgaris (Kidney bean).